A 297-amino-acid polypeptide reads, in one-letter code: Vacuolar protein sorting-associated protein 26C (297 aa).

The protein belongs to the VPS26 family. In terms of assembly, component of the commander complex that is essential for endosomal recycling of transmembrane cargos; the commander complex is composed of the CCC subcomplex and the retriever subcomplex. Component of the heterotrimeric retriever complex consisting of VPS26C, VPS29 and VPS35L; within the complex interacts with VPS35L. Interacts with SNX17 (via C-terminus); the interaction is direct and associates SNX17 with the retriever complex. Interacts with SNX31; the interaction is direct.

The protein localises to the endosome. Functionally, component of the commander complex that is essential for endosomal recycling of transmembrane cargos; the commander complex is composed of the CCC subcomplex and the retriever subcomplex. Component of the retriever complex, which is a heterotrimeric complex related to retromer cargo-selective complex (CSC) and essential for retromer-independent retrieval and recycling of numerous cargos such as integrin alpha-5/beta-1 (ITGA5:ITGB1). The recruitment of the retriever complex to the endosomal membrane involves CCC and WASH complexes. In the endosomes, drives the retriever and recycling of NxxY-motif-containing cargo proteins by coupling to SNX17, a cargo essential for the homeostatic maintenance of numerous cell surface proteins associated with processes that include cell migration, cell adhesion, nutrient supply and cell signaling. The polypeptide is Vacuolar protein sorting-associated protein 26C (Mus musculus (Mouse)).